The following is a 597-amino-acid chain: Aspartate--tRNA ligase (597 aa).

Glu-173 contacts L-aspartate. The interval 197–200 (QLFK) is aspartate. Arg-219 is an L-aspartate binding site. Residues 219–221 (RDE) and Gln-228 contribute to the ATP site. An L-aspartate-binding site is contributed by His-449. Glu-483 contacts ATP. An L-aspartate-binding site is contributed by Arg-490. 535 to 538 (GLDR) is a binding site for ATP.

Belongs to the class-II aminoacyl-tRNA synthetase family. Type 1 subfamily. As to quaternary structure, homodimer.

Its subcellular location is the cytoplasm. The enzyme catalyses tRNA(Asp) + L-aspartate + ATP = L-aspartyl-tRNA(Asp) + AMP + diphosphate. In terms of biological role, catalyzes the attachment of L-aspartate to tRNA(Asp) in a two-step reaction: L-aspartate is first activated by ATP to form Asp-AMP and then transferred to the acceptor end of tRNA(Asp). The chain is Aspartate--tRNA ligase from Shewanella pealeana (strain ATCC 700345 / ANG-SQ1).